The following is a 584-amino-acid chain: MNKNCDYCGLTIYSETYHKCVESSVKINDETKIVNYKIITIDELGILAGKNDREAQDEIVYRYLNQDAINLSQKNIKPINWENIIERAIDDQYFTYFLLFFAFDHDEYHVIFDVLFDVLFENVKLAAKTGDSMAQYNLGQMYYRGISTKKNIQKAIKWITKSADQNNKYGLINLARFYEYGDGVLLDIDKATQLLEQASCQNFSKAQFYLGRIYMYKDPPDYKLAFKYYQQAANQNHSSAQYFIAVFYKTGKCVAQDYKKAVHWLTLAASQGLNSAKIKLAEMYMKGIDVEQNYHKAFELLNSSIYDDGTNNYYDEVAMTELACMYKRGLGIEKNISKAIYLHIKSRNTKNIFKIFEINTITFINPINVDCENNNLSDIDQLESKIIYKLQFLMIKLKYEWSNIYHDDISNSLQEIENSFTRLIKLRIQLNNSSAMINCLSFKKNTSYKFDVFNTKNAYVNYYVYDDISYINIGLNNIKLVNNFQKNLDKFMFCNIFLDLELALENKHKEKIDDLINAVKNDDRSHQLNIVKDLDNIKFVLSQTKKISSKLIGYVNILMNDLKSNTHIRNQQFQLEYANIFGYD.

6 Sel1-like repeats span residues 132–167 (SMAQ…DQNN), 168–203 (KYGL…CQNF), 204–237 (SKAQ…NQNH), 238–273 (SSAQ…SQGL), 274–309 (NSAK…YDDG), and 316–351 (EVAM…NTKN).

The sequence is that of Putative sel1-like repeat-containing protein L18 from Acanthamoeba polyphaga (Amoeba).